Here is a 418-residue protein sequence, read N- to C-terminus: UDP-N-acetylglucosamine 1-carboxyvinyltransferase (418 aa).

K22–N23 is a binding site for phosphoenolpyruvate. Position 92 (R92) interacts with UDP-N-acetyl-alpha-D-glucosamine. Catalysis depends on C116, which acts as the Proton donor. C116 carries the 2-(S-cysteinyl)pyruvic acid O-phosphothioketal modification. Residues R121–Q125, D306, and I328 each bind UDP-N-acetyl-alpha-D-glucosamine.

This sequence belongs to the EPSP synthase family. MurA subfamily.

The protein localises to the cytoplasm. The enzyme catalyses phosphoenolpyruvate + UDP-N-acetyl-alpha-D-glucosamine = UDP-N-acetyl-3-O-(1-carboxyvinyl)-alpha-D-glucosamine + phosphate. It functions in the pathway cell wall biogenesis; peptidoglycan biosynthesis. Functionally, cell wall formation. Adds enolpyruvyl to UDP-N-acetylglucosamine. This Acinetobacter baylyi (strain ATCC 33305 / BD413 / ADP1) protein is UDP-N-acetylglucosamine 1-carboxyvinyltransferase.